The chain runs to 257 residues: Phosphonates import ATP-binding protein PhnC (257 aa).

Positions 4–248 (IEFKDVSKVY…VFNHIYGRSI (245 aa)) constitute an ABC transporter domain.

Belongs to the ABC transporter superfamily. Phosphonates importer (TC 3.A.1.9.1) family. In terms of assembly, the complex is composed of two ATP-binding proteins (PhnC), two transmembrane proteins (PhnE) and a solute-binding protein (PhnD).

It is found in the cell membrane. It catalyses the reaction phosphonate(out) + ATP + H2O = phosphonate(in) + ADP + phosphate + H(+). In terms of biological role, part of the ABC transporter complex PhnCDE involved in phosphonates import. Responsible for energy coupling to the transport system. In Staphylococcus epidermidis (strain ATCC 35984 / DSM 28319 / BCRC 17069 / CCUG 31568 / BM 3577 / RP62A), this protein is Phosphonates import ATP-binding protein PhnC.